The chain runs to 47 residues: High light-inducible protein HliC (47 aa).

Residues 1-14 (MNNENSKFGFTAFA) are Cytoplasmic-facing. The short motif at 15–20 (ENWNGR) is the Chlorophyll-binding motif element. A transmembrane span lies at residues 15–36 (ENWNGRLAMIGFSSALILELVS). At 37-47 (GQGVLHFFGIL) the chain is on the lumenal, thylakoid side.

It belongs to the Hlip family. Forms heterodimers with both HliA and HliB; these are associated with photosystem II (PSII) assembly intermediates containing CP47 (psbB). In the absence of CP47 (psbB) and HliD, forms a homooligomer in vivo that binds 2 chlorophyll a and 1 beta-carotenoid per monomer. Cofractionates in an approximately 50 kDa fraction the thylakoid membrane with HliD. Associated in vivo with monomeric PSII. Purified in several chlorophyll- and carotenoid-containing complexes, including photosystem II (PSII) assembly intermediate complex RCII* (iD1, D1, D2, PsbE, PsbF, PsbI, Ycf39, Ycf48, HliC and HliD) and the Ycf39-Hlip complex (Ycf39, HliC, HliD and pigments).

Its subcellular location is the cellular thylakoid membrane. In terms of biological role, forms a number of heteromers involved in photosystem II (PSII) assembly and/or repair under high light stress. Required for binding of chlorophyll and carotenoids by the Ycf39-Hlip complex. The Ycf39-Hlip complex binds D1 at an early stage of PSII assembly along with Ycf48, ribosomes and ChlG, the last enzyme in chlorophyll biosynthesis; it may be involved in chlorophyll reuse and delivery to D1 in the initial stages of PSII assembly. HliA-HliC and HliB-HliC heterodimers bind chlorophyll and carotenoids in a 1:0.6 ratio. Complexes bind mostly beta-carotenoid, but minor amounts of echinenone and beta-crytoxanthin are also detected. The complexes efficiently quench chlorophyll fluorescence, contributing to photoprotection. Deletion of 4 to 5 members of the Hlip family suggests the proteins are involved in regulation of chlorophyll biosynthesis, in stabilization of chlorophyll-binding proteins and/or in reuse of chlorophylls, and may regulate tetrapyrrole biosynthesis. Might bind chlorophyll and/or carotenoids in association with HliD (called the ScpBE pair). The Hlips might regulate tetrapyrrole biosynthesis, maybe at the level of aminolevulinic acid synthesis and probably stabilize PSII assembly intermediates. The polypeptide is High light-inducible protein HliC (hliC) (Synechocystis sp. (strain ATCC 27184 / PCC 6803 / Kazusa)).